We begin with the raw amino-acid sequence, 559 residues long: Frizzled-5 (559 aa).

The first 26 residues, 1-26, serve as a signal peptide directing secretion; sequence MGSFRSGVFALSFVVLLLDYFAPAQA. Over 27–220 the chain is Extracellular; that stretch reads ASKAIVCQEI…QPYFTQDEKM (194 aa). Residues 28 to 149 form the FZ domain; the sequence is SKAIVCQEIT…GDPDTLCMYY (122 aa). Cystine bridges form between Cys-33–Cys-94, Cys-41–Cys-87, Cys-78–Cys-116, Cys-105–Cys-146, and Cys-109–Cys-133. The N-linked (GlcNAc...) asparagine glycan is linked to Asn-47. The N-linked (GlcNAc...) asparagine glycan is linked to Asn-150. A helical transmembrane segment spans residues 221–241; the sequence is FVTFWIGLWSILCFISTFTTV. Residues 242–257 are Cytoplasmic-facing; that stretch reads ATFLIDMERFRYPERP. Residues 258–278 form a helical membrane-spanning segment; sequence IIFLSACYLFVSIGYVVRLIV. Topologically, residues 279–301 are extracellular; the sequence is GHENVACNKDHIHYETTGPALCT. The helical transmembrane segment at 302–322 threads the bilayer; it reads IVFLLIYFFGMASSIWWVILT. Residues 323-343 lie on the Cytoplasmic side of the membrane; it reads FTWFLAAGMKWGNEAIASYSQ. Residues 344–364 form a helical membrane-spanning segment; that stretch reads YFHMAAWLIPSVKSIAVLALS. Residues 365 to 387 are Extracellular-facing; that stretch reads SVDGDPVAGICYVGNQNLDNLRG. The chain crosses the membrane as a helical span at residues 388 to 408; sequence FVLAPLVVYLFSGTMFLLAGF. The Cytoplasmic portion of the chain corresponds to 409 to 434; that stretch reads VSLFRIRSVIKQGGTKTDKLEKLMIR. Residues 435–455 traverse the membrane as a helical segment; the sequence is IGIFSVLYTVPATIVVACYIY. At 456-483 the chain is on the extracellular side; the sequence is EQHYREHWEKTHNCSCPGDKQRYRPDYA. N-linked (GlcNAc...) asparagine glycosylation occurs at Asn-468. The helical transmembrane segment at 484-504 threads the bilayer; that stretch reads VFMLKYLMCLVVGITSGVWIW. Residues 505–559 lie on the Cytoplasmic side of the membrane; the sequence is SGKTLESWKRFTGRCCRNSKPINASAYSEASRALTPRTGLSNLTLPHKQVPLSHV. A Lys-Thr-X-X-X-Trp motif, mediates interaction with the PDZ domain of Dvl family members motif is present at residues 507–512; the sequence is KTLESW. A PDZ-binding motif is present at residues 557 to 559; sequence SHV.

The protein belongs to the G-protein coupled receptor Fz/Smo family. In terms of tissue distribution, expressed in retina.

The protein resides in the cell membrane. It is found in the golgi apparatus membrane. In terms of biological role, receptor for Wnt proteins that functions in the canonical Wnt/beta-catenin signaling pathway. The canonical Wnt/beta-catenin signaling pathway leads to the activation of disheveled proteins, inhibition of GSK-3 kinase, nuclear accumulation of beta-catenin and activation of Wnt target genes. A second signaling pathway involving PKC and calcium fluxes has been seen for some family members, but it is not yet clear if it represents a distinct pathway or if it can be integrated in the canonical pathway, as PKC seems to be required for Wnt-mediated inactivation of GSK-3 kinase. Both pathways seem to involve interactions with G-proteins. May be involved in transduction and intercellular transmission of polarity information during tissue morphogenesis and/or in differentiated tissues. The protein is Frizzled-5 (fzd5) of Xenopus laevis (African clawed frog).